Consider the following 182-residue polypeptide: Probable chorismate pyruvate-lyase (182 aa).

Substrate contacts are provided by arginine 81, leucine 119, and glutamate 171.

The protein belongs to the UbiC family.

The protein resides in the cytoplasm. The catalysed reaction is chorismate = 4-hydroxybenzoate + pyruvate. The protein operates within cofactor biosynthesis; ubiquinone biosynthesis. In terms of biological role, removes the pyruvyl group from chorismate, with concomitant aromatization of the ring, to provide 4-hydroxybenzoate (4HB) for the ubiquinone pathway. The polypeptide is Probable chorismate pyruvate-lyase (Pseudomonas putida (Arthrobacter siderocapsulatus)).